We begin with the raw amino-acid sequence, 225 residues long: THAP domain-containing protein 1 A (225 aa).

The segment at 5-57 adopts a THAP-type zinc-finger fold; sequence CSAYGCKNRYDKDKPISFHKFPLKRPLLCKKWEAAVRRAEFKPTKYSSICSDH. The stretch at 139–194 forms a coiled coil; the sequence is VEDTVHQRRRIQQLEEQVDKLRKKLKIANQKCRRQERSLEKLEREVSEYREAKGSG.

It belongs to the THAP1 family.

The protein resides in the nucleus. It is found in the nucleoplasm. Functionally, DNA-binding transcription regulator that regulates endothelial cell proliferation and G1/S cell-cycle progression. Specifically binds the 5'-[AT]NTNN[GT]GGCA[AGT]-3' core DNA sequence and acts by modulating expression of pRB-E2F cell-cycle target genes. The sequence is that of THAP domain-containing protein 1 A (thap1-a) from Xenopus laevis (African clawed frog).